The following is a 348-amino-acid chain: UDP-N-acetyl-alpha-D-glucosaminouronate 4-epimerase (348 aa).

Residues F26, I27, D46, T50, G51, D77, I78, Q97, Y165, K169, and V195 each coordinate NAD(+). Y165 (proton acceptor) is an active-site residue.

The protein belongs to the NAD(P)-dependent epimerase/dehydratase family. Homodimer. It depends on NAD(+) as a cofactor.

It carries out the reaction UDP-2-acetamido-2-deoxy-alpha-D-glucuronate = UDP-2-acetamido-2-deoxy-alpha-D-galacturonate. The catalysed reaction is UDP-N-acetyl-alpha-D-glucosamine = UDP-N-acetyl-alpha-D-galactosamine. The protein operates within capsule biogenesis; capsule polysaccharide biosynthesis. It participates in glycan metabolism; Vi-antigen biosynthesis. Epimerase required for the biosynthesis of the capsular polysaccharide, commonly referred as the Vi antigen, an important virulence factor. Catalyzes the reversible epimerization of UDP-N-acetylglucosaminuronic acid (UDP-GlcNAcA) to UDP-N-acetylgalactosaminuronic acid (UDP-GalNAcA). Also catalyzes, with lower efficiency, the reversible epimerization of UDP-N-acetylglucosamine (UDP-GlcNAc) to UDP-N-acetylgalactosamine (UDP-GalNAc). Cannot use UDP-glucose (UDP-Glc) and UDP-galactose (UDP-Gal) as substrates. This Salmonella typhi protein is UDP-N-acetyl-alpha-D-glucosaminouronate 4-epimerase.